We begin with the raw amino-acid sequence, 918 residues long: Protein translocase subunit SecA (918 aa).

ATP contacts are provided by residues Gln87, 105-109 (GEGKT), and Asp516. Zn(2+) is bound by residues Cys902, Cys904, Cys913, and His914.

This sequence belongs to the SecA family. As to quaternary structure, monomer and homodimer. Part of the essential Sec protein translocation apparatus which comprises SecA, SecYEG and auxiliary proteins SecDF-YajC and YidC. Requires Zn(2+) as cofactor.

The protein localises to the cell inner membrane. The protein resides in the cytoplasm. It catalyses the reaction ATP + H2O + cellular proteinSide 1 = ADP + phosphate + cellular proteinSide 2.. Part of the Sec protein translocase complex. Interacts with the SecYEG preprotein conducting channel. Has a central role in coupling the hydrolysis of ATP to the transfer of proteins into and across the cell membrane, serving both as a receptor for the preprotein-SecB complex and as an ATP-driven molecular motor driving the stepwise translocation of polypeptide chains across the membrane. The polypeptide is Protein translocase subunit SecA (Methylibium petroleiphilum (strain ATCC BAA-1232 / LMG 22953 / PM1)).